The primary structure comprises 31 residues: Dermaseptin-7.2TR (31 aa).

A Glutamic acid 1-amide modification is found at Glu-31.

As to expression, expressed by the skin glands.

It localises to the secreted. In terms of biological role, has antimicrobial activity. This Phyllomedusa trinitatis (Trinidad leaf frog) protein is Dermaseptin-7.2TR.